The sequence spans 72 residues: Small ribosomal subunit protein bS18c (72 aa).

This sequence belongs to the bacterial ribosomal protein bS18 family. Part of the 30S ribosomal subunit.

The protein resides in the plastid. It localises to the chloroplast. This chain is Small ribosomal subunit protein bS18c, found in Emiliania huxleyi (Coccolithophore).